The chain runs to 128 residues: Transcription antitermination protein NusB (128 aa).

This sequence belongs to the NusB family.

Functionally, involved in transcription antitermination. Required for transcription of ribosomal RNA (rRNA) genes. Binds specifically to the boxA antiterminator sequence of the ribosomal RNA (rrn) operons. The chain is Transcription antitermination protein NusB from Listeria welshimeri serovar 6b (strain ATCC 35897 / DSM 20650 / CCUG 15529 / CIP 8149 / NCTC 11857 / SLCC 5334 / V8).